A 631-amino-acid polypeptide reads, in one-letter code: Nucleoside triphosphatase I (631 aa).

The Helicase ATP-binding domain occupies 42 to 204; sequence FLGLDSMHSL…TMLVNLLRPG (163 aa). 55–62 is a binding site for ATP; the sequence is HETGVGKT. Positions 141–144 match the DEXH box motif; that stretch reads DECH. One can recognise a Helicase C-terminal domain in the interval 367 to 532; sequence KFIDVCLGIL…EFVQLFRVFK (166 aa). The tract at residues 457–524 is binding to the cap-specific mRNA (nucleoside-2'-O-)-methyltransferase; that stretch reads DIFILDMTWN…EIIQSKSKEF (68 aa).

This sequence belongs to the helicase family. NPH I subfamily. Monomer. Interacts (via C-terminus) with RAP94/OPG109 (via N-terminus). Interacts with the cap-specific mRNA (nucleoside-2'-O-)-methyltransferase OPG102.

Its subcellular location is the virion. The enzyme catalyses a ribonucleoside 5'-triphosphate + H2O = a ribonucleoside 5'-diphosphate + phosphate + H(+). Its function is as follows. DNA-dependent ATPase that acts as a 5' to 3' translocase on single-stranded DNA and thereby plays a role in transcription termination of viral early genes. Uses forward translocation in concert with the viral RNA polymerase RAP94/OPG109 subunit and the capping enzyme/VTF to catalyze release of UUUUUNU-containing nascent RNA from the elongation complex. In addition, acts as a positive elongation factor to assist transcription through problematic sequences. The chain is Nucleoside triphosphatase I (OPG123) from Variola virus (isolate Human/India/Ind3/1967) (VARV).